The primary structure comprises 159 residues: Siroheme decarboxylase beta subunit (159 aa).

152–157 is a substrate binding site; sequence KTSMTY.

Belongs to the Ahb/Nir family. In terms of assembly, forms a heterodimer composed of AhbA and AhbB.

The catalysed reaction is siroheme + 2 H(+) = 12,18-didecarboxysiroheme + 2 CO2. It functions in the pathway porphyrin-containing compound metabolism; protoheme biosynthesis. Involved in siroheme-dependent heme b biosynthesis. Catalyzes the decarboxylation of siroheme into didecarboxysiroheme. Siroheme is decarboxylated to monodecarboxysiroheme, which is in turn decarboxylated to didecarboxysiroheme. This Desulfovibrio desulfuricans (strain ATCC 27774 / DSM 6949 / MB) protein is Siroheme decarboxylase beta subunit.